The sequence spans 181 residues: Large ribosomal subunit protein uL10 (181 aa).

Belongs to the universal ribosomal protein uL10 family. In terms of assembly, part of the ribosomal stalk of the 50S ribosomal subunit. The N-terminus interacts with L11 and the large rRNA to form the base of the stalk. The C-terminus forms an elongated spine to which L12 dimers bind in a sequential fashion forming a multimeric L10(L12)X complex.

Its function is as follows. Forms part of the ribosomal stalk, playing a central role in the interaction of the ribosome with GTP-bound translation factors. In Amoebophilus asiaticus (strain 5a2), this protein is Large ribosomal subunit protein uL10.